We begin with the raw amino-acid sequence, 175 residues long: Adenine phosphoribosyltransferase (175 aa).

Belongs to the purine/pyrimidine phosphoribosyltransferase family. In terms of assembly, homodimer.

It is found in the cytoplasm. The enzyme catalyses AMP + diphosphate = 5-phospho-alpha-D-ribose 1-diphosphate + adenine. It functions in the pathway purine metabolism; AMP biosynthesis via salvage pathway; AMP from adenine: step 1/1. In terms of biological role, catalyzes a salvage reaction resulting in the formation of AMP, that is energically less costly than de novo synthesis. In Lactobacillus acidophilus (strain ATCC 700396 / NCK56 / N2 / NCFM), this protein is Adenine phosphoribosyltransferase.